Here is a 151-residue protein sequence, read N- to C-terminus: AVTPMSADQLALFKSSWNTVKHNEVDILYAVFKANPDIQAKFPQFAGKDLDSIKDSADFAVHSGRIVGFFSEVIGLIGNPENRPALKTLIDGLASSHKARGIEKAQFEEFRASLVDYLSHHLDWNDTMKSTWDLALNNMFFYILHALEVAQ.

One can recognise a Globin domain in the interval 4 to 148 (PMSADQLALF…MFFYILHALE (145 aa)). Heme b-binding residues include His-62 and His-97.

It belongs to the globin family. In terms of assembly, homodimer.

The polypeptide is Globin CTT-VIII (CTT-8) (Chironomus thummi thummi (Midge)).